The chain runs to 165 residues: Chemotaxis protein CheW (165 aa).

Belongs to the CheW family.

Its function is as follows. Plays an essential role in chemotaxis signal transduction system in order to colonize the host stomach. The protein is Chemotaxis protein CheW of Helicobacter pylori (strain ATCC 700392 / 26695) (Campylobacter pylori).